Reading from the N-terminus, the 356-residue chain is Chitin elicitor-binding protein (356 aa).

An N-terminal signal peptide occupies residues 1 to 28 (MASLTAALATPAAAALLLLVLLAAPASA). Asn30 is a glycosylation site (N-linked (GlcNAc...) asparagine). Cystine bridges form between Cys33-Cys100, Cys41-Cys164, Cys98-Cys162, and Cys100-Cys164. Position 50 to 51 (50 to 51 (PN)) interacts with chitin. N-linked (GlcNAc...) asparagine glycans are attached at residues Asn63 and Asn89. LysM domains are found at residues 111–158 (PIYV…TLWI) and 175–219 (LAYS…ILDV). Chitin-binding positions include 117–123 (PQDGLDA), Asn142, 145–152 (PDPNKINV), Thr155, and Gly182. N-linked (GlcNAc...) asparagine glycosylation is present at Asn151. N-linked (GlcNAc...) asparagine glycosylation is present at Asn184. Chitin-binding positions include Ser186 and 211 to 213 (LQM). 2 disulfides stabilise this stretch: Cys224–Cys257 and Cys252–Cys274. N-linked (GlcNAc...) asparagine glycosylation is found at Asn265, Asn281, Asn290, Asn306, and Asn319. Residues 336-356 (RSMWSMSVISFHMVLIIICFL) traverse the membrane as a helical segment.

Forms homooligomer. Interacts with CERK1. Binds to chitin oligosaccharide elicitor. Interacts with LYP4 and LYP6. N-glycosylated. In terms of tissue distribution, expressed in seedlings, roots, shoots, stems and flowers.

It localises to the cell membrane. Functionally, chitin elicitor-binding protein involved in the perception and transduction of chitin oligosaccharide elicitor signal for defense responses. The protein is Chitin elicitor-binding protein of Oryza sativa subsp. japonica (Rice).